The primary structure comprises 407 residues: Putative F-box protein At5g60560 (407 aa).

One can recognise an F-box domain in the interval 2–49 (TMMSDLSEDLVEEILCRVSITSLGAVRSTCKGWYVLSKTRVLCKAETK).

The protein is Putative F-box protein At5g60560 of Arabidopsis thaliana (Mouse-ear cress).